A 278-amino-acid chain; its full sequence is Sulfur carrier protein FdhD (278 aa).

The active-site Cysteine persulfide intermediate is C121. 260–265 contributes to the Mo-bis(molybdopterin guanine dinucleotide) binding site; that stretch reads FCKPGR.

It belongs to the FdhD family.

The protein resides in the cytoplasm. Required for formate dehydrogenase (FDH) activity. Acts as a sulfur carrier protein that transfers sulfur from IscS to the molybdenum cofactor prior to its insertion into FDH. This chain is Sulfur carrier protein FdhD, found in Salmonella newport (strain SL254).